The sequence spans 155 residues: Small ribosomal subunit protein uS7 (155 aa).

Belongs to the universal ribosomal protein uS7 family. As to quaternary structure, part of the 30S ribosomal subunit. Contacts proteins S9 and S11.

Its function is as follows. One of the primary rRNA binding proteins, it binds directly to 16S rRNA where it nucleates assembly of the head domain of the 30S subunit. Is located at the subunit interface close to the decoding center, probably blocks exit of the E-site tRNA. In Mycoplasma pneumoniae (strain ATCC 29342 / M129 / Subtype 1) (Mycoplasmoides pneumoniae), this protein is Small ribosomal subunit protein uS7.